The primary structure comprises 178 residues: Protein GrpE (178 aa).

The span at 1–11 shows a compositional bias: basic and acidic residues; it reads MAEDQAPREET. The interval 1 to 30 is disordered; sequence MAEDQAPREETVEAPELTEAPEIDELETLR.

It belongs to the GrpE family. In terms of assembly, homodimer.

The protein localises to the cytoplasm. Its function is as follows. Participates actively in the response to hyperosmotic and heat shock by preventing the aggregation of stress-denatured proteins, in association with DnaK and GrpE. It is the nucleotide exchange factor for DnaK and may function as a thermosensor. Unfolded proteins bind initially to DnaJ; upon interaction with the DnaJ-bound protein, DnaK hydrolyzes its bound ATP, resulting in the formation of a stable complex. GrpE releases ADP from DnaK; ATP binding to DnaK triggers the release of the substrate protein, thus completing the reaction cycle. Several rounds of ATP-dependent interactions between DnaJ, DnaK and GrpE are required for fully efficient folding. The chain is Protein GrpE from Cereibacter sphaeroides (strain ATCC 17023 / DSM 158 / JCM 6121 / CCUG 31486 / LMG 2827 / NBRC 12203 / NCIMB 8253 / ATH 2.4.1.) (Rhodobacter sphaeroides).